The following is a 358-amino-acid chain: Zinc-type alcohol dehydrogenase-like protein YogA (358 aa).

The protein belongs to the zinc-containing alcohol dehydrogenase family. Quinone oxidoreductase subfamily.

It participates in secondary metabolite biosynthesis. Functionally, zinc-type alcohol dehydrogenase-like protein; part of the gene cluster that mediates the biosynthesis of phomenoic acid, a long chain aliphatic carboxylic acid that does not appear to be essential for pathogenicity but may play a role in allowing to outcompete other fungi in the environmental niche via its antifungal properties. The polyketide synthase produces the long methylated aliphatic carboxylic acid chain of phomenoic acid. The cluster-specific cytochrome P450 monooxygenase may then hydroxylate the methyl group of carbon 31. The putative dehydrogenase YogA, which has no obvious role in phomenoic acid biosynthesis, may further modify phomenoic acid to produce a compound not identified yet. This Leptosphaeria maculans (strain JN3 / isolate v23.1.3 / race Av1-4-5-6-7-8) (Blackleg fungus) protein is Zinc-type alcohol dehydrogenase-like protein YogA.